A 530-amino-acid chain; its full sequence is uncharacterized protein (530 aa).

A coiled-coil region spans residues 485-529 (SKEENREIKLSIRENKEKQRKKSVEKSVSKLQNQLNRLLNKNTIE).

This is an uncharacterized protein from Acanthamoeba polyphaga (Amoeba).